Here is a 370-residue protein sequence, read N- to C-terminus: Histidinol-phosphate aminotransferase (370 aa).

The residue at position 231 (Lys231) is an N6-(pyridoxal phosphate)lysine.

The protein belongs to the class-II pyridoxal-phosphate-dependent aminotransferase family. Histidinol-phosphate aminotransferase subfamily. In terms of assembly, homodimer. Pyridoxal 5'-phosphate serves as cofactor.

It catalyses the reaction L-histidinol phosphate + 2-oxoglutarate = 3-(imidazol-4-yl)-2-oxopropyl phosphate + L-glutamate. Its pathway is amino-acid biosynthesis; L-histidine biosynthesis; L-histidine from 5-phospho-alpha-D-ribose 1-diphosphate: step 7/9. The sequence is that of Histidinol-phosphate aminotransferase from Paracidovorax citrulli (strain AAC00-1) (Acidovorax citrulli).